Reading from the N-terminus, the 252-residue chain is MADGFWNRQQQHLPPPGGMLKRPRTEYDTAPSGVTSGNEVHNYIAQNNGHQMLNDTKILGSAYDRFLQSAGLTSFNSGEASVIGGVGFARGVGELPGHSLGDPSAMGHLSGVGGGPDLSRNGRDVNFGGQLPIDAVSRPGPETIPLPRDASSTLYVEGLPSDSTKREVAHIFRPFVGYREVRLVAKESKHRGGDPLILCFVDFANPACAATALSALQGYKVDEINPESSYLRLQFSRSPGRRSGGPGPRGKR.

Disordered regions lie at residues 1–34 (MADG…PSGV) and 232–252 (RLQF…RGKR). Positions 152-238 (STLYVEGLPS…SYLRLQFSRS (87 aa)) constitute an RRM domain. Residues 242–252 (RSGGPGPRGKR) show a composition bias toward gly residues.

Probable RNA-binding protein. This is RNA-binding protein 2 from Medicago truncatula (Barrel medic).